We begin with the raw amino-acid sequence, 775 residues long: Protein STRUBBELIG-RECEPTOR FAMILY 1 (775 aa).

The N-terminal stretch at 1–31 (MRSMRSGRDNNICFLGFLSFALISLPSLSLA) is a signal peptide. The Extracellular portion of the chain corresponds to 32-314 (LTNPDDVAAI…GKEDSFTSKR (283 aa)). LRR repeat units lie at residues 101–122 (SLKA…TLPV), 123–146 (SLQN…SSLK), 147–169 (SLSV…FQDL), 171–193 (LMIN…MQNL), 195–217 (TLTS…QDLP), and 218–238 (LKDL…KLLS). N133 carries N-linked (GlcNAc...) asparagine glycosylation. N-linked (GlcNAc...) asparagine glycans are attached at residues N181 and N192. The N-linked (GlcNAc...) asparagine glycan is linked to N250. Positions 254 to 308 (APSPSPETPPSPTSPKRPFFGPPSPNASAGHGQAHVRSPPSDHHPSRPTPQGKED) are disordered. Pro residues predominate over residues 256 to 278 (SPSPETPPSPTSPKRPFFGPPSP). N279 is a glycosylation site (N-linked (GlcNAc...) asparagine). The helical transmembrane segment at 315-335 (IIWISILGAFSFVVLALVCLL) threads the bilayer. The Cytoplasmic portion of the chain corresponds to 336 to 775 (CGRKCLRKRE…NGDNQYTGRR (440 aa)). Residues 345 to 414 (EDSEQLSKPH…VGSESKQESH (70 aa)) form a disordered region. Positions 367-379 (RSNASMLPPSNTF) are enriched in polar residues. Residues 380 to 391 (NKDKEARPKERV) are compositionally biased toward basic and acidic residues. Residues 478–756 (FSHENLIGTG…EVVQDLSDMI (279 aa)) enclose the Protein kinase domain.

Belongs to the protein kinase superfamily. Ser/Thr protein kinase family. Expressed in roots, stems, leaves and flowers. Low expression in seedlings and siliques.

The protein resides in the membrane. Not essential for epidermal patterning and not redundant with STRUBBELIG. The chain is Protein STRUBBELIG-RECEPTOR FAMILY 1 (SRF1) from Arabidopsis thaliana (Mouse-ear cress).